Consider the following 590-residue polypeptide: Protein O-linked-mannose beta-1,4-N-acetylglucosaminyltransferase 2 (590 aa).

The Cytoplasmic portion of the chain corresponds to 1 to 4 (MSVG). Residues 5 to 25 (TLLNGLLVSIVAALLWKYSKL) form a helical; Signal-anchor for type II membrane protein membrane-spanning segment. Topologically, residues 26–590 (SEHAALLEEE…PFADVLMCRT (565 aa)) are lumenal. 3 N-linked (GlcNAc...) asparagine glycosylation sites follow: N98, N275, and N553. The region spanning 494–590 (RVRDPQCQTS…PFADVLMCRT (97 aa)) is the Fibronectin type-III domain.

The protein belongs to the glycosyltransferase 61 family.

It localises to the endoplasmic reticulum membrane. The enzyme catalyses 3-O-(alpha-D-mannosyl)-L-threonyl-[protein] + UDP-N-acetyl-alpha-D-glucosamine = 3-O-(N-acetyl-beta-D-glucosaminyl-(1-&gt;4)-alpha-D-mannosyl)-L-threonyl-[protein] + UDP + H(+). It participates in protein modification; protein glycosylation. Its function is as follows. O-linked mannose beta-1,4-N-acetylglucosaminyltransferase that transfers UDP-N-acetyl-D-glucosamine to the 4-position of the mannose to generate N-acetyl-D-glucosamine-beta-1,4-O-D-mannosylprotein. Involved in the biosynthesis of the phosphorylated O-mannosyl trisaccharide (N-acetylgalactosamine-beta-3-N-acetylglucosamine-beta-4-(phosphate-6-)mannose), a carbohydrate structure present in alpha-dystroglycan (DAG1), which is required for binding laminin G-like domain-containing extracellular proteins with high affinity. The protein is Protein O-linked-mannose beta-1,4-N-acetylglucosaminyltransferase 2 (pomgnt2) of Takifugu rubripes (Japanese pufferfish).